The following is a 195-amino-acid chain: HTH-type transcriptional regulator BetI (195 aa).

Positions 8–68 constitute an HTH tetR-type domain; it reads SIRRRQLIDA…ATMRDITSQL (61 aa). A DNA-binding region (H-T-H motif) is located at residues 31-50; the sequence is TIAQIARRAGVSTGIISHYF.

The protein operates within amine and polyamine biosynthesis; betaine biosynthesis via choline pathway [regulation]. Its function is as follows. Repressor involved in the biosynthesis of the osmoprotectant glycine betaine. It represses transcription of the choline transporter BetT and the genes of BetAB involved in the synthesis of glycine betaine. This Escherichia coli O17:K52:H18 (strain UMN026 / ExPEC) protein is HTH-type transcriptional regulator BetI.